The following is a 543-amino-acid chain: Limonene hydroxylase (543 aa).

The Sigma-54 factor interaction domain occupies 232 to 464; the sequence is VVTYNPSFEK…LRNVIERAFL (233 aa). Residues 260–267 and 324–333 contribute to the ATP site; these read GETGSGKE and ADGGTLFLDE.

It carries out the reaction (4S)-limonene + reduced [NADPH--hemoprotein reductase] + O2 = (1S,5R)-carveol + oxidized [NADPH--hemoprotein reductase] + H2O + H(+). The enzyme catalyses (4S)-limonene + reduced [NADPH--hemoprotein reductase] + O2 = (4S)-perillyl alcohol + oxidized [NADPH--hemoprotein reductase] + H2O + H(+). The catalysed reaction is perillyl alcohol + NAD(+) = perillyl aldehyde + NADH + H(+). It catalyses the reaction (1S,5R)-carveol + NADP(+) = (R)-carvone + NADPH + H(+). Functionally, involved in limonene hydroxylation to a mixture of carveol and perillyl alcohol as well as in dehydrogenation of these products to carvone and perillyl aldehyde. Aromatic alcohols containing an isopropyl or isopropenyl group at ring position 4 also served as substrates for the dehydrogenase activity. In Geobacillus stearothermophilus (Bacillus stearothermophilus), this protein is Limonene hydroxylase.